A 2289-amino-acid polypeptide reads, in one-letter code: Protein Ycf2 (2289 aa).

1643–1650 (GSIGTGRS) contacts ATP.

The protein belongs to the Ycf2 family.

Its subcellular location is the plastid. It localises to the chloroplast stroma. Its function is as follows. Probable ATPase of unknown function. Its presence in a non-photosynthetic plant (Epifagus virginiana) and experiments in tobacco indicate that it has an essential function which is probably not related to photosynthesis. This Capsella bursa-pastoris (Shepherd's purse) protein is Protein Ycf2.